Here is a 223-residue protein sequence, read N- to C-terminus: uncharacterized protein (223 aa).

Positions 40-70 (GSKRLKPAKFGTEGKERVEQRTERQRTGSSK) are disordered. The segment covering 51-70 (TEGKERVEQRTERQRTGSSK) has biased composition (basic and acidic residues).

This is an uncharacterized protein from Homo sapiens (Human).